A 227-amino-acid chain; its full sequence is MKVSYHGHSVVKIEANGKVILIDPFLTGNPKTDLKTEDVKVDAILLSHGHGDHVGDTVELAKKNNAVVVAPFELATFLSWQGVNTHPMHIGGSHEFDFGKVKFTQAFHGSSYIDEENKTITYTGMPAGILFTAEEKTVYHAGDTALFSDMKLIGELNKVDLAFLPIGDNFTMGPEDAVLAAKWINAKTVVPMHYNTFPVIEQDPYQFVEKLQNCTGKVLEAGESITL.

It belongs to the UPF0173 family.

This Bacillus cereus (strain ATCC 14579 / DSM 31 / CCUG 7414 / JCM 2152 / NBRC 15305 / NCIMB 9373 / NCTC 2599 / NRRL B-3711) protein is UPF0173 metal-dependent hydrolase BC_4613.